A 294-amino-acid polypeptide reads, in one-letter code: Non-selective voltage-gated ion channel VDAC2 (294 aa).

An N-acetylalanine modification is found at alanine 2. ATP-binding residues include lysine 23 and lysine 31. Lysine 31 carries the post-translational modification N6-acetyllysine; alternate. Lysine 31 carries the N6-succinyllysine; alternate modification. Residue lysine 31 forms a Glycyl lysine isopeptide (Lys-Gly) (interchain with G-Cter in ubiquitin); alternate linkage. 2 beta stranded membrane-spanning segments follow: residues 37 to 46 (LVKLDVKTKS) and 50 to 58 (VEFSTSGSS). Glycyl lysine isopeptide (Lys-Gly) (interchain with G-Cter in ubiquitin) cross-links involve residues lysine 64 and lysine 72. The chain crosses the membrane as a beta stranded span at residues 65–75 (VTGTLETKYKW). Tyrosine 78 carries the post-translational modification Phosphotyrosine. The next 3 beta stranded transmembrane spans lie at 80-87 (LTFTEKWN), 91-100 (TLGTEIAIED), and 106-115 (LKLTFDTTFS). Position 118 is a phosphothreonine (threonine 118). The residue at position 120 (lysine 120) is an N6-acetyllysine; alternate. A Glycyl lysine isopeptide (Lys-Gly) (interchain with G-Cter in ubiquitin); alternate cross-link involves residue lysine 120. Residues lysine 121 and lysine 124 each participate in a glycyl lysine isopeptide (Lys-Gly) (interchain with G-Cter in ubiquitin) cross-link. The next 4 beta stranded transmembrane spans lie at 122-131 (SGKIKSSYKR), 134-141 (INLGCDVD), 148-156 (AIHGSAVFG), and 161-169 (LAGYQMTFD). Lysine 172 participates in a covalent cross-link: Glycyl lysine isopeptide (Lys-Gly) (interchain with G-Cter in ubiquitin). Transmembrane regions (beta stranded) follow at residues 174-186 (KLTR…GYRT), 189-196 (FQLHTNVN), 200-209 (EFGGSIYQKV), 213-222 (LDTSVNLAWT), 229-238 (RFGIAAKYQL), and 242-249 (ASISAKVN). Serine 251 is subject to Phosphoserine. Residues 253–255 (LIG) and 271–275 (SALVD) contribute to the NAD(+) site. 2 beta stranded membrane passes run 253 to 262 (LIGVGYTQTL) and 265 to 274 (GVKLTLSALV). Lysine 277 carries the N6-acetyllysine; alternate modification. A Glycyl lysine isopeptide (Lys-Gly) (interchain with G-Cter in ubiquitin); alternate cross-link involves residue lysine 277. Residues 284–293 (HKVGLALELE) form a beta stranded membrane-spanning segment. Lysine 285 is covalently cross-linked (Glycyl lysine isopeptide (Lys-Gly) (interchain with G-Cter in ubiquitin)).

Belongs to the eukaryotic mitochondrial porin family. In terms of assembly, monomer, homodimer and higher order oligomers; formation of higher order structures is necessary for scramblase activity. Interacts with ARMC12 in a TBC1D21-dependent manner. Interacts with KLC3. Interacts with SPATA33. Interacts with PPP3CC in a SPATA33-dependent manner. In terms of processing, ubiquitinated by PRKN during mitophagy, leading to its degradation and enhancement of mitophagy. Deubiquitinated by USP30. In terms of tissue distribution, expressed in erythrocytes (at protein level). Expressed in all tissues examined.

The protein localises to the mitochondrion outer membrane. It localises to the membrane. It catalyses the reaction chloride(in) = chloride(out). It carries out the reaction K(+)(in) = K(+)(out). The enzyme catalyses a 1,2-diacyl-sn-glycero-3-phospho-L-serine(in) = a 1,2-diacyl-sn-glycero-3-phospho-L-serine(out). The catalysed reaction is a 1,2-diacyl-sn-glycero-3-phosphocholine(in) = a 1,2-diacyl-sn-glycero-3-phosphocholine(out). It catalyses the reaction a 1,2-diacyl-sn-glycero-3-phospho-(1D-myo-inositol)(in) = a 1,2-diacyl-sn-glycero-3-phospho-(1D-myo-inositol)(out). Its function is as follows. Non-selective voltage-gated ion channel that mediates the transport of anions and cations through the mitochondrion outer membrane and plasma membrane. The channel adopts an open conformation at zero mV and a closed conformation at both positive and negative potentials. There are two populations of channels; the main that functions in a lower open-state conductance with lower ion selectivity, that switch, in a voltage-dependent manner, from the open to a low-conducting 'closed' state and the other that has a normal ion selectivity in the typical high conductance, 'open' state. Binds various lipids, including the sphingolipid ceramide, the phospholipid phosphatidylcholine, and the sterols cholesterol and oxysterol. Binding of ceramide promotes the mitochondrial outer membrane permeabilization (MOMP) apoptotic pathway. In terms of biological role, catalyzes the scrambling of phospholipids across the outer mitochondrial membrane; the mechanism is unrelated to channel activity and is capable of translocating both anionic and zwitterionic phospholipids. The protein is Non-selective voltage-gated ion channel VDAC2 of Homo sapiens (Human).